We begin with the raw amino-acid sequence, 165 residues long: Nucleotide-binding protein SYNW1816 (165 aa).

This sequence belongs to the YajQ family.

Its function is as follows. Nucleotide-binding protein. The polypeptide is Nucleotide-binding protein SYNW1816 (Parasynechococcus marenigrum (strain WH8102)).